Here is a 487-residue protein sequence, read N- to C-terminus: Uronate isomerase (487 aa).

The protein belongs to the metallo-dependent hydrolases superfamily. Uronate isomerase family.

It catalyses the reaction D-glucuronate = D-fructuronate. The enzyme catalyses aldehydo-D-galacturonate = keto-D-tagaturonate. The protein operates within carbohydrate metabolism; pentose and glucuronate interconversion. The polypeptide is Uronate isomerase (Caulobacter vibrioides (strain ATCC 19089 / CIP 103742 / CB 15) (Caulobacter crescentus)).